A 305-amino-acid chain; its full sequence is UDP-N-acetylenolpyruvoylglucosamine reductase 2 (305 aa).

The 165-residue stretch at 33 to 197 folds into the FAD-binding PCMH-type domain; sequence VGGKADVFVA…LEARFELEEG (165 aa). The active site involves arginine 176. The Proton donor role is filled by serine 226. Residue glutamate 296 is part of the active site.

This sequence belongs to the MurB family. The cofactor is FAD.

It is found in the cytoplasm. It carries out the reaction UDP-N-acetyl-alpha-D-muramate + NADP(+) = UDP-N-acetyl-3-O-(1-carboxyvinyl)-alpha-D-glucosamine + NADPH + H(+). The protein operates within cell wall biogenesis; peptidoglycan biosynthesis. In terms of biological role, cell wall formation. This Bacillus cereus (strain ATCC 10987 / NRS 248) protein is UDP-N-acetylenolpyruvoylglucosamine reductase 2.